Reading from the N-terminus, the 1049-residue chain is Dyslexia-associated protein KIAA0319-like protein (1049 aa).

Topologically, residues 1–29 (MEKRLGVKPNPASWILSGYYWQTSAKWLR) are cytoplasmic. The helical transmembrane segment at 30 to 50 (TLYLFYTCFCFSVLWLSTDAS) threads the bilayer. The MANSC domain occupies 49–127 (ASESRCQQGK…AFRTHSSNSM (79 aa)). Topologically, residues 51 to 932 (ESRCQQGKTQ…ESNCEWSVLY (882 aa)) are extracellular. The disordered stretch occupies residues 234 to 277 (TTDLTAELPGGPKNVSAQPEIPEGLATTPSTQQVKSSEKTQIAV). N-linked (GlcNAc...) asparagine glycosylation is found at Asn247, Asn395, and Asn487. PKD domains lie at 310–401 (VVSA…VKPE), 409–498 (IAIV…VNKA), 504–594 (VANA…VQPE), 600–688 (QADA…VKEE), and 694–785 (IAKI…VKPD). A helical transmembrane segment spans residues 933–953 (VIIATFVIVVALGILSWTVIC). Residues 954–1049 (CCKRQKGKPK…KARSPREEIL (96 aa)) are Cytoplasmic-facing. At Thr974 the chain carries Phosphothreonine. Phosphoserine is present on residues Ser978, Ser1009, and Ser1031. The tract at residues 1022–1049 (GKLLHGQNGSVPNGQTPLKARSPREEIL) is disordered. The span at 1028-1037 (QNGSVPNGQT) shows a compositional bias: polar residues. Thr1037 is modified (phosphothreonine).

Interacts with RTN4R. Post-translationally, N-glycosylated.

It localises to the cytoplasmic granule membrane. The protein localises to the golgi apparatus membrane. The protein resides in the golgi apparatus. Its subcellular location is the trans-Golgi network membrane. It is found in the cell membrane. Possible role in axon guidance through interaction with RTN4R. The protein is Dyslexia-associated protein KIAA0319-like protein of Pongo abelii (Sumatran orangutan).